Consider the following 383-residue polypeptide: MSQLLPQAYLTNFHNRIRNEDVPLFITAAPTRNHKRAKVVNYSEYDNDLLLDDFIEQDQNDDDEKVHSDNGKGEGEEVGHEDAVASNNNLPDLEQQDDPTGILRYPRIRETFLQSKIAVRYEQVLEAGVGGSGEAVGIAEDEGAGAYSSSSQPVVIPIRLNLEHNGHKIIDFFTWNLNDHSLTLEQFAQIYCQDLDFAHNLSLQNQIVAAINDQLQEYETLASVVVPDLHVIINLTCNLDSKLYEDNFEWNLNDQTLSPEQFAELVVQDLGLTREFMPAIAHALYESILKIKKDWLEGHLNPEHVANGAAFGCLSGIRLDIDTLGSNWCPKVEVLSQWEIEKREIEKERNMRRLKRESAKVDDRLARRRGKRRMDDLETTMRI.

Positions 61–80 (DDDEKVHSDNGKGEGEEVGH) are disordered. The span at 64–80 (EKVHSDNGKGEGEEVGH) shows a compositional bias: basic and acidic residues.

This sequence belongs to the SNF5 family.

The protein resides in the nucleus. In terms of biological role, part of the chromatin structure-remodeling complex (RSC) which is involved in transcription regulation and nucleosome positioning. RSC is responsible for the transfer of a histone octamer from a nucleosome core particle to naked DNA. The reaction requires ATP and involves an activated RSC-nucleosome intermediate. Remodeling reaction also involves DNA translocation, DNA twist and conformational change. As a reconfigurer of centromeric and flanking nucleosomes, RSC complex is required both for proper kinetochore function in chromosome segregation and, via a PKC1-dependent signaling pathway, for organization of the cellular cytoskeleton. This subunit is essential for mitotic growth and required for cell cycle progression. This Eremothecium gossypii (strain ATCC 10895 / CBS 109.51 / FGSC 9923 / NRRL Y-1056) (Yeast) protein is Chromatin structure-remodeling complex subunit SFH1 (SFH1).